The chain runs to 317 residues: Melanocyte-stimulating hormone receptor (317 aa).

Over 1-37 (MPMQGAQRKLLGSLNSTPTATSNLGLAANHTGAPCLE) the chain is Extracellular. An N-linked (GlcNAc...) asparagine glycan is attached at Asn29. A helical transmembrane segment spans residues 38–63 (VSIPDGLFLSLGLVSLVENVLVVAAI). At 64 to 72 (AKNRNLHSS) the chain is on the cytoplasmic side. The helical transmembrane segment at 73–93 (MYCFICCLALSDLLVSGSNML) threads the bilayer. Residues 94–118 (ETAVILLLEAGALATRTSAVQRLHN) are Extracellular-facing. A helical transmembrane segment spans residues 119–140 (TIDVLTCSSMLCSLCFLGAIAV). Over 141 to 163 (DRYISIFYALRYHSIVTLPRTQR) the chain is Cytoplasmic. Residues 164–183 (VIAAIWVASVLSSTLFITYY) traverse the membrane as a helical segment. Over 184 to 191 (DHAAVLLC) the chain is Extracellular. The helical transmembrane segment at 192–211 (LVVFFLAMLVLMAVLYVHML) threads the bilayer. Topologically, residues 212–240 (ARACQHAHGIIRLHKRQSPAHQGFGLRGA) are cytoplasmic. The chain crosses the membrane as a helical span at residues 241–266 (ATLTILLGIFFLCWGPFFLHLTLVVF). Over 267 to 279 (CPQHLTCSCIFKN) the chain is Extracellular. Residues 280–300 (FKVFLTLIICNTIIDPLIYAF) form a helical membrane-spanning segment. The Cytoplasmic portion of the chain corresponds to 301 to 317 (RSQELRRTLKEVLLCSW). Residue Cys315 is the site of S-palmitoyl cysteine attachment.

Belongs to the G-protein coupled receptor 1 family. Interacts with MGRN1, but does not undergo MGRN1-mediated ubiquitination; this interaction competes with GNAS-binding and thus inhibits agonist-induced cAMP production. Interacts with OPN3; the interaction results in a decrease in MC1R-mediated cAMP signaling and ultimately a decrease in melanin production in melanocytes.

Its subcellular location is the cell membrane. Functionally, receptor for MSH (alpha, beta and gamma) and ACTH. The activity of this receptor is mediated by G proteins which activate adenylate cyclase. Mediates melanogenesis, the production of eumelanin (black/brown) and phaeomelanin (red/yellow), via regulation of cAMP signaling in melanocytes. The chain is Melanocyte-stimulating hormone receptor (MC1R) from Saguinus imperator (Emperor tamarin).